A 194-amino-acid chain; its full sequence is Large ribosomal subunit protein uL10 (194 aa).

Low complexity predominate over residues 172 to 187 (EGGAAEAPAEAATEAP). The disordered stretch occupies residues 172 to 194 (EGGAAEAPAEAATEAPAEAEAES).

Belongs to the universal ribosomal protein uL10 family. Part of the ribosomal stalk of the 50S ribosomal subunit. The N-terminus interacts with L11 and the large rRNA to form the base of the stalk. The C-terminus forms an elongated spine to which L12 dimers bind in a sequential fashion forming a multimeric L10(L12)X complex.

Functionally, forms part of the ribosomal stalk, playing a central role in the interaction of the ribosome with GTP-bound translation factors. This is Large ribosomal subunit protein uL10 from Rhodococcus erythropolis (strain PR4 / NBRC 100887).